The chain runs to 396 residues: Aspartate aminotransferase (396 aa).

L-aspartate-binding residues include Gly-34, Trp-130, and Asn-183. The residue at position 246 (Lys-246) is an N6-(pyridoxal phosphate)lysine. Arg-374 lines the L-aspartate pocket.

Belongs to the class-I pyridoxal-phosphate-dependent aminotransferase family. In terms of assembly, homodimer. The cofactor is pyridoxal 5'-phosphate.

It is found in the cytoplasm. The enzyme catalyses L-aspartate + 2-oxoglutarate = oxaloacetate + L-glutamate. The chain is Aspartate aminotransferase (aspC) from Escherichia coli (strain K12).